The primary structure comprises 119 residues: Platelet basic protein (119 aa).

The first 33 residues, 1-33, serve as a signal peptide directing secretion; sequence MSLRLGAISSCTTSSPFPVLQVLLPLSLLLTTL. A propeptide spanning residues 34–39 is cleaved from the precursor; the sequence is VPATMG. Cystine bridges form between Cys-54–Cys-80 and Cys-56–Cys-96.

Its subcellular location is the secreted. Its function is as follows. Chemoattractant factor for neutrophils. The sequence is that of Platelet basic protein (PPBP) from Sus scrofa (Pig).